An 869-amino-acid polypeptide reads, in one-letter code: Sodium-dependent phosphate transporter (869 aa).

Residues 1 to 18 lie on the Extracellular side of the membrane; it reads MEAVAELSAPSLAGAPGE. A helical membrane pass occupies residues 19 to 39; it reads YTWIVAVAGVTCFLTAFAIGA. The Cytoplasmic segment spans residues 40 to 54; that stretch reads NDVANTFSSSVGSRA. A helical transmembrane segment spans residues 55 to 75; that stretch reads IPLWAAIGMSAVLETVGATLL. Topologically, residues 76–97 are extracellular; that stretch reads GGAVTDSIRSKIIDFEVFRETP. The chain crosses the membrane as a helical span at residues 98–118; it reads SILMTGMLCALVGAGLWLFLA. The Cytoplasmic segment spans residues 119–120; the sequence is NH. A helical membrane pass occupies residues 121-141; the sequence is LGLPVSTTHSIIGALLGFGLA. The Extracellular segment spans residues 142-154; the sequence is SGNVRAVKWTQVA. The chain crosses the membrane as a helical span at residues 155 to 175; sequence FIVGSWVAAPLAASAAGATIF. Residues 176 to 196 are Cytoplasmic-facing; it reads VCMRRLILRSRQPLRRAKRFL. A helical membrane pass occupies residues 197-217; the sequence is WIFIYLITLTFSVFLVFKNFF. Topologically, residues 218–250 are extracellular; that stretch reads ELNVSCDQMVAGGRVEHFEPCRISRWADAHSGT. Residues 251-271 traverse the membrane as a helical segment; that stretch reads ALGIAVALSVALTFVISCLVY. Over 272–720 the chain is Cytoplasmic; it reads RFAFYRVESY…SGSADSEIGS (449 aa). 3 disordered regions span residues 286 to 312, 374 to 401, and 453 to 571; these read KRSSRTEPRDASEEGTGPSHARPGGLL, AAAAKPDVGTAAQSPESRFAADPVGSSV, and SAFL…KRER. A compositionally biased stretch (low complexity) spans 457 to 481; that stretch reads SSPSSSVPPSSPSPSSTPSSPSASP. Positions 482-491 are enriched in pro residues; it reads RRPPSRPPVP. Over residues 492-509 the composition is skewed to low complexity; that stretch reads RTCSPAPVSPSVPRAFAS. Residues 556-571 are compositionally biased toward basic and acidic residues; the sequence is PHPERRDEVPAAKRER. The helical transmembrane segment at 721–741 threads the bilayer; it reads PWYILLFGGLSMSLGLALLGY. Residues 742–759 lie on the Extracellular side of the membrane; sequence RVIKTVGVKLVKITPARG. Residues 760-780 traverse the membrane as a helical segment; sequence FSMELGAAWTVLIFSAIGIPL. At 781-837 the chain is on the cytoplasmic side; the sequence is STTHCAVGSTVGVGLMEPKHPRRETGDGPVAEGEEPKKRAVQCPVINTASVNWKLFG. Residues 838 to 858 form a helical membrane-spanning segment; sequence GVFVSWIITIAFSALVTAALF. Topologically, residues 859-869 are extracellular; the sequence is SFAAYSPRMVS.

The protein belongs to the inorganic phosphate transporter (PiT) (TC 2.A.20) family.

It localises to the cell membrane. The protein localises to the vacuole membrane. Its subcellular location is the cytoplasmic vesicle membrane. The enzyme catalyses 2 Na(+)(out) + phosphate(out) = 2 Na(+)(in) + phosphate(in). Sodium-phosphate symporter which preferentially transports the monovalent form of phosphate with a stoichiometry of two sodium ions per phosphate ion. Plays a role in stabilizing the cytosolic pH and osmoregulation. May be required for optimal virulence of parasites in vivo. The protein is Sodium-dependent phosphate transporter of Toxoplasma gondii (strain ATCC 50861 / VEG).